Reading from the N-terminus, the 772-residue chain is Protein transport protein SEC23 F (772 aa).

Zn(2+) contacts are provided by Cys65, Cys68, Cys87, and Cys90. A zinc finger-like region spans residues 65–90; sequence CKTCKALLNAFARVDFAAMNWVCPFC.

The protein belongs to the SEC23/SEC24 family. SEC23 subfamily. As to quaternary structure, component of the coat protein complex II (COPII), composed of at least five proteins: the Sec23/24 complex, the Sec13/31 complex and Sar1. Interacts with SEC24A.

It is found in the cytoplasmic vesicle. The protein resides in the COPII-coated vesicle membrane. It localises to the endoplasmic reticulum membrane. The protein localises to the membrane. In terms of biological role, component of the coat protein complex II (COPII) which promotes the formation of transport vesicles from the endoplasmic reticulum (ER). The coat has two main functions, the physical deformation of the endoplasmic reticulum membrane into vesicles and the selection of cargo molecules. This is Protein transport protein SEC23 F from Arabidopsis thaliana (Mouse-ear cress).